Consider the following 368-residue polypeptide: Isocitrate dehydrogenase [NAD] regulatory subunit 3, mitochondrial (368 aa).

The N-terminal 26 residues, 1 to 26, are a transit peptide targeting the mitochondrion; the sequence is MARRSVSIFNRLLANPPSPFTSLSRS.

This sequence belongs to the isocitrate and isopropylmalate dehydrogenases family. As to quaternary structure, heterooligomer of catalytic and regulatory subunits. Interacts with 14-3-3-like proteins GRF1 GRF3 and GRF8. Mainly expressed at a low level in pollen.

Its subcellular location is the mitochondrion. Functionally, performs an essential role in the oxidative function of the citric acid cycle. The sequence is that of Isocitrate dehydrogenase [NAD] regulatory subunit 3, mitochondrial (IDH3) from Arabidopsis thaliana (Mouse-ear cress).